A 996-amino-acid polypeptide reads, in one-letter code: Low-density lipoprotein receptor-related protein 8 (996 aa).

Residues 1 to 28 form the signal peptide; that stretch reads MGRPELGALRPLALLLLLLLQLQHLSAA. Over 29–858 the chain is Extracellular; it reads DPLPGGQGPV…GSQMGSTVTA (830 aa). LDL-receptor class A domains lie at 40-76, 79-117, 120-158, 160-196, 199-238, 250-287, 290-326, and 330-369; these read ECEE…DDCP, TCAD…ATCS, ECPA…AGCP, LCAP…RGCS, ACPP…ELCG, ACAP…ADCS, PCRE…AGCL, and TCEG…KVCG. 30 disulfides stabilise this stretch: cysteine 41/cysteine 53, cysteine 48/cysteine 66, cysteine 60/cysteine 75, cysteine 80/cysteine 92, cysteine 87/cysteine 105, cysteine 99/cysteine 116, cysteine 121/cysteine 135, cysteine 128/cysteine 148, cysteine 142/cysteine 157, cysteine 161/cysteine 173, cysteine 168/cysteine 186, cysteine 180/cysteine 195, cysteine 200/cysteine 213, cysteine 207/cysteine 226, cysteine 220/cysteine 237, cysteine 251/cysteine 264, cysteine 259/cysteine 277, cysteine 271/cysteine 286, cysteine 291/cysteine 303, cysteine 298/cysteine 316, cysteine 310/cysteine 325, cysteine 331/cysteine 344, cysteine 339/cysteine 357, cysteine 351/cysteine 368, cysteine 373/cysteine 384, cysteine 380/cysteine 393, cysteine 395/cysteine 407, cysteine 413/cysteine 423, cysteine 419/cysteine 432, and cysteine 434/cysteine 447. Residues tryptophan 58, aspartate 61, aspartate 63, aspartate 65, aspartate 71, and glutamate 72 each coordinate Ca(2+). Asparagine 170 carries N-linked (GlcNAc...) asparagine glycosylation. One can recognise an EGF-like 1 domain in the interval 364-408; that stretch reads PQKVCGLNECLHNNGGCSHICTDLKIGFECTCPAGFQLLDQKTCG. An EGF-like 2; calcium-binding domain is found at 409-448; that stretch reads DIDECQDPDACSQICVNYKGYFKCECHPGYEMDTLTKNCK. 5 LDL-receptor class B repeats span residues 495 to 541, 542 to 584, 585 to 628, 629 to 671, and 672 to 714; these read NRIY…DWVH, KHIY…DPLR, GFMY…DLLS, QRLY…AVFE, and DKVF…FHEL. Asparagine 551 is a glycosylation site (N-linked (GlcNAc...) asparagine). Residues 773–831 form a clustered O-linked oligosaccharides region; that stretch reads STSTTTLASAMTRTVPATTRAPGTTIHDPTYQNHSTETPSQTAAAPHSVNVPRAPSTSP. The segment at 778–851 is disordered; the sequence is TLASAMTRTV…SQHYGNEGSQ (74 aa). Residues 802–815 are compositionally biased toward polar residues; sequence TYQNHSTETPSQTA. A glycan (N-linked (GlcNAc...) asparagine) is linked at asparagine 805. The span at 824–839 shows a compositional bias: low complexity; that stretch reads PRAPSTSPSTPSPATS. Asparagine 840 is a glycosylation site (N-linked (GlcNAc...) asparagine). The segment covering 840 to 851 has biased composition (polar residues); sequence NHSQHYGNEGSQ. The chain crosses the membrane as a helical span at residues 859 to 881; sequence AVIGVIVPIVVIALLCMSGYLIW. Over 882–996 the chain is Cytoplasmic; sequence RNWKRKNTKS…ALSLEDDGLP (115 aa).

It belongs to the LDLR family. As to quaternary structure, homooligomer. Interacts with VLDLR. Reelin associates with two or more receptor molecules. Interacts with DAB1 and JNK-interacting proteins. Interacts with SNX17. Interacts with PCSK9. Interacts with MDK; this interaction is calcium dependent. Interacts with CLU. Post-translationally, O-glycosylated. Some alternatively spliced isoforms lack the O-linked sugar domain. Undergoes sequential, furin and gamma-secretase dependent, proteolytic processing, resulting in the extracellular release of the entire ligand-binding domain as a soluble polypeptide and in the intracellular domain (ICD) release into the cytoplasm. The gamma-secretase-dependent proteolytical processing occurs after the bulk of the extracellular domain has been shed, in a furin-dependent manner, in alternatively spliced isoforms carrying the furin cleavage site. Hypoglycosylation (mainly hypo-O-glycosylation) leads to increased extracellular cleavage, which in turn results in accelerating release of the intracellular domain (ICD) by the gamma-secretase. The resulting receptor fragment is able to inhibit Reelin signaling and in particular the Reelin-induced DAB1 phosphorylation. In terms of processing, tyrosine phosphorylated upon apoE binding. Post-translationally, ubiquitinated by MYLIP leading to degradation. Expressed in neurons throughout the brain, with strong expression in pyramidal neurons of the hippocampus, granule cells of the dentate gyrus, cortical neurons and Purkinje cells of the cerebellum. Also expressed in the epithelium of the choroid plexus and of the blood vessels (apical expression), as well as in the epididymis.

The protein localises to the cell membrane. Its subcellular location is the secreted. In terms of biological role, cell surface receptor for Reelin (RELN) and apolipoprotein E (apoE)-containing ligands. LRP8 participates in transmitting the extracellular Reelin signal to intracellular signaling processes, by binding to DAB1 on its cytoplasmic tail. Reelin acts via both the VLDL receptor (VLDLR) and LRP8 to regulate DAB1 tyrosine phosphorylation and microtubule function in neurons. LRP8 has higher affinity for Reelin than VLDLR. LRP8 is thus a key component of the Reelin pathway which governs neuronal layering of the forebrain during embryonic brain development. Binds the endoplasmic reticulum resident receptor-associated protein (RAP). Binds dimers of beta 2-glycoprotein I and may be involved in the suppression of platelet aggregation in the vasculature. Highly expressed in the initial segment of the epididymis, where it affects the functional expression of clusterin and phospholipid hydroperoxide glutathione peroxidase (PHGPx), two proteins required for sperm maturation. May also function as an endocytic receptor. Not required for endocytic uptake of SEPP1 in the kidney which is mediated by LRP2. Together with its ligand, apolipoprotein E (apoE), may indirectly play a role in the suppression of the innate immune response by controlling the survival of myeloid-derived suppressor cells. This is Low-density lipoprotein receptor-related protein 8 (Lrp8) from Mus musculus (Mouse).